The sequence spans 259 residues: Polycomb group RING finger protein 1 (259 aa).

The RING-type zinc-finger motif lies at 45-84; that stretch reads CYLCAGYFIDATTITECLHTFCKSCIVKYLQTSKYCPLCN.

Component of a PRC1-like complex.

The protein localises to the nucleus. Functionally, component of a Polycomb group (PcG) multiprotein PRC1-like complex, a complex class required to maintain the transcriptionally repressive state of many genes, including Hox genes, throughout development. PcG PRC1 complex acts via chromatin remodeling and modification of histones; it mediates monoubiquitination of histone H2A 'Lys-119', rendering chromatin heritably changed in its expressibility. In Xenopus tropicalis (Western clawed frog), this protein is Polycomb group RING finger protein 1 (pcgf1).